The primary structure comprises 556 residues: MKKLLQAKALILALGLFQLPAIAQTQMQADRTNGQFATEEMQRAFQETNPPAGPVRAIAEYERSAAVLVRYPFGIPMELIKELAKNDKVITIVASESQKNTVITQYTQSGVNLSNCDFIIAKTDSYWTRDYTGWFAMYDTNKVGLVDFIYNRPRPNDDEFPKYEAQYLGIEMFGMKLKQTGGNYMTDGYGSAVQSHIAYTENSSLSQAQVNQKMKDYLGITHHDVVQDPNGEYINHVDCWGKYLAPNKILIRKVPDNHPQHQALEDMAAYFAAQTCAWGTKYEVYRALATNEQPYTNSLILNNRVFVPVNGPASVDNDALNVYKTAMPGYEIIGVKGASGTPWLGTDALHCRTHEVADKGYLYIKHYPILGEQAGPDYKIEADVVSCANATISPVQCYYRINGSGSFKAADMTMESTGHYTYSFTGLNKNDKVEYYISAADNSGRKETYPFIGEPDPFKFTCMNETNTCTVTGAAKALRAWFNAGRSELAVSVSLNIAGTYRIKLYNTAGEEVAAMTKELVAGTSVFSMDVYSQAPGTYVLVVEGNGIRETMKILK.

Positions 1 to 23 (MKKLLQAKALILALGLFQLPAIA) are cleaved as a signal peptide. The propeptide occupies 24–43 (QTQMQADRTNGQFATEEMQR). Residue cysteine 351 is the Amidino-cysteine intermediate of the active site.

It belongs to the agmatine deiminase family. It depends on FAD as a cofactor. FMN is required as a cofactor.

It localises to the secreted. Its activity is regulated as follows. Inhibited by cysteine and TLCK. Inhibited by high concentration of thiourea and thio-L-citrulline. Functionally, deiminates the guanidino group of C-terminal arginine residues on a variety of peptides, including the vasoregulatory peptide-hormone bradykinin, to yield ammonia and a citrulline residue. May promote the growth of the pathogen in the periodontal pocket by producing ammonia, ammonia having a protective effect during acidic cleaning cycles in the mouth. In Porphyromonas gingivalis (strain ATCC BAA-308 / W83), this protein is Peptidylarginine deiminase.